A 121-amino-acid chain; its full sequence is MHYPTEADTSTGPNPSATSAPVRPRHVTPSLSPSSSSSPSPDSFYYFLAAAVILTAALAAALLTPNPGCTIVITGHTTIIQGSCPIPPQLVLAAHPRGLSLEQYLKFTNTLPDGSQHRSHR.

Residues 1–40 form a disordered region; it reads MHYPTEADTSTGPNPSATSAPVRPRHVTPSLSPSSSSSPS. At 1-43 the chain is on the lumenal side; the sequence is MHYPTEADTSTGPNPSATSAPVRPRHVTPSLSPSSSSSPSPDS. Over residues 7 to 19 the composition is skewed to polar residues; the sequence is ADTSTGPNPSATS. Residues 29-40 show a composition bias toward low complexity; it reads PSLSPSSSSSPS. The chain crosses the membrane as a helical span at residues 44–64; that stretch reads FYYFLAAAVILTAALAAALLT. The Cytoplasmic segment spans residues 65–121; it reads PNPGCTIVITGHTTIIQGSCPIPPQLVLAAHPRGLSLEQYLKFTNTLPDGSQHRSHR.

The protein belongs to the Tymovirales TGBp3 protein family.

The protein localises to the host endoplasmic reticulum membrane. Its function is as follows. Plays a role in viral cell-to-cell propagation, by facilitating genome transport to neighboring plant cells through plasmosdesmata. May induce the formation of granular vesicles derived from the Endoplasmic reticulum, which align on actin filaments. The polypeptide is Movement protein TGBp3 (Plantago asiatica (P1AMV)).